The following is a 573-amino-acid chain: Probable D-xylulose kinase A (573 aa).

His-100, Arg-171, Asp-287, and Asn-288 together coordinate substrate. ATP-binding positions include Trp-368, 473-474 (GG), and Asn-477.

The protein belongs to the FGGY kinase family.

It is found in the cytoplasm. It catalyses the reaction D-xylulose + ATP = D-xylulose 5-phosphate + ADP + H(+). Functionally, highly specific D-xylulose kinase which participates in the catabolism of xylose. Xylose is a major component of hemicelluloses such as xylan. Most fungi utilize D-xylose via three enzymatic reactions, xylose reductase (XR), xylitol dehydrogenase (XDH), and xylulokinase, to form xylulose 5-phosphate, which enters pentose phosphate pathway. This Aspergillus terreus (strain NIH 2624 / FGSC A1156) protein is Probable D-xylulose kinase A (xkiA).